The sequence spans 242 residues: Ubiquinone/menaquinone biosynthesis C-methyltransferase UbiE (242 aa).

S-adenosyl-L-methionine contacts are provided by residues threonine 69, aspartate 87, and 114–115 (NA).

This sequence belongs to the class I-like SAM-binding methyltransferase superfamily. MenG/UbiE family.

The enzyme catalyses a 2-demethylmenaquinol + S-adenosyl-L-methionine = a menaquinol + S-adenosyl-L-homocysteine + H(+). It catalyses the reaction a 2-methoxy-6-(all-trans-polyprenyl)benzene-1,4-diol + S-adenosyl-L-methionine = a 5-methoxy-2-methyl-3-(all-trans-polyprenyl)benzene-1,4-diol + S-adenosyl-L-homocysteine + H(+). It functions in the pathway quinol/quinone metabolism; menaquinone biosynthesis; menaquinol from 1,4-dihydroxy-2-naphthoate: step 2/2. It participates in cofactor biosynthesis; ubiquinone biosynthesis. In terms of biological role, methyltransferase required for the conversion of demethylmenaquinol (DMKH2) to menaquinol (MKH2) and the conversion of 2-polyprenyl-6-methoxy-1,4-benzoquinol (DDMQH2) to 2-polyprenyl-3-methyl-6-methoxy-1,4-benzoquinol (DMQH2). In Zymomonas mobilis subsp. mobilis (strain ATCC 31821 / ZM4 / CP4), this protein is Ubiquinone/menaquinone biosynthesis C-methyltransferase UbiE.